A 145-amino-acid chain; its full sequence is 6-pyruvoyl tetrahydrobiopterin synthase (145 aa).

Position 19 is a phosphoserine; by PKG (serine 19). Zn(2+) is bound at residue histidine 24. The residue at position 28 (serine 28) is a Phosphoserine. The active-site Proton acceptor is the cysteine 43. Zn(2+)-binding residues include histidine 49 and histidine 51. Catalysis depends on histidine 90, which acts as the Charge relay system. Phosphotyrosine is present on tyrosine 128. Glutamate 134 serves as the catalytic Charge relay system.

Belongs to the PTPS family. In terms of assembly, homohexamer formed of two homotrimers in a head to head fashion. Zn(2+) is required as a cofactor. Post-translationally, phosphorylation of Ser-19 is required for maximal enzyme activity.

The enzyme catalyses 7,8-dihydroneopterin 3'-triphosphate = 6-pyruvoyl-5,6,7,8-tetrahydropterin + triphosphate + H(+). It functions in the pathway cofactor biosynthesis; tetrahydrobiopterin biosynthesis; tetrahydrobiopterin from 7,8-dihydroneopterin triphosphate: step 1/3. Functionally, involved in the biosynthesis of tetrahydrobiopterin, an essential cofactor of aromatic amino acid hydroxylases. Catalyzes the transformation of 7,8-dihydroneopterin triphosphate into 6-pyruvoyl tetrahydropterin. This Homo sapiens (Human) protein is 6-pyruvoyl tetrahydrobiopterin synthase (PTS).